A 90-amino-acid polypeptide reads, in one-letter code: Molybdopterin synthase sulfur carrier subunit (90 aa).

The residue at position 90 (Gly-90) is a 1-thioglycine; alternate. Glycyl adenylate; alternate is present on Gly-90.

Belongs to the MoaD family. MOCS2A subfamily. Heterotetramer; composed of 2 small (Mocs2A) and 2 large (Mocs2B) subunits. In terms of processing, C-terminal thiocarboxylation occurs in 2 steps, it is first acyl-adenylated (-COAMP) via the hesA/moeB/thiF part of MOCS3, then thiocarboxylated (-COSH) via the rhodanese domain of MOCS3.

It localises to the cytoplasm. It participates in cofactor biosynthesis; molybdopterin biosynthesis. Its function is as follows. Acts as a sulfur carrier required for molybdopterin biosynthesis. Component of the molybdopterin synthase complex that catalyzes the conversion of precursor Z into molybdopterin by mediating the incorporation of 2 sulfur atoms into precursor Z to generate a dithiolene group. In the complex, serves as sulfur donor by being thiocarboxylated (-COSH) at its C-terminus by MOCS3. After interaction with Mocs2B, the sulfur is then transferred to precursor Z to form molybdopterin. Involved during biosynthesis of the molybdenum cofactor. This is Molybdopterin synthase sulfur carrier subunit from Drosophila melanogaster (Fruit fly).